Reading from the N-terminus, the 155-residue chain is Small ribosomal subunit protein uS7c (155 aa).

This sequence belongs to the universal ribosomal protein uS7 family. In terms of assembly, part of the 30S ribosomal subunit.

It is found in the plastid. The protein localises to the chloroplast. In terms of biological role, one of the primary rRNA binding proteins, it binds directly to 16S rRNA where it nucleates assembly of the head domain of the 30S subunit. The sequence is that of Small ribosomal subunit protein uS7c (rps7) from Lactoris fernandeziana.